Consider the following 384-residue polypeptide: S-adenosylmethionine synthase (384 aa).

An ATP-binding site is contributed by His-15. Asp-17 contacts Mg(2+). Glu-43 is a K(+) binding site. Glu-56 and Gln-99 together coordinate L-methionine. The tract at residues 99-109 is flexible loop; the sequence is QSPDINQGVDK. ATP contacts are provided by residues 164-166, 230-231, Asp-239, 245-246, Ala-262, and Lys-266; these read DAK, RF, and RK. L-methionine is bound at residue Asp-239. Lys-270 contacts L-methionine.

It belongs to the AdoMet synthase family. Homotetramer; dimer of dimers. Requires Mg(2+) as cofactor. The cofactor is K(+).

The protein resides in the cytoplasm. The catalysed reaction is L-methionine + ATP + H2O = S-adenosyl-L-methionine + phosphate + diphosphate. Its pathway is amino-acid biosynthesis; S-adenosyl-L-methionine biosynthesis; S-adenosyl-L-methionine from L-methionine: step 1/1. Its function is as follows. Catalyzes the formation of S-adenosylmethionine (AdoMet) from methionine and ATP. The overall synthetic reaction is composed of two sequential steps, AdoMet formation and the subsequent tripolyphosphate hydrolysis which occurs prior to release of AdoMet from the enzyme. The chain is S-adenosylmethionine synthase from Vibrio vulnificus (strain YJ016).